We begin with the raw amino-acid sequence, 626 residues long: Basic helix-loop-helix ARNT-like protein 1 (626 aa).

The segment at 1 to 60 is disordered; sequence MADQRMDISSTISDFMSPGATDLLSSPLGTSGMDCNRKRKGSSTDYQESMDTDKDDPHGR. Residue Ser-17 is modified to Phosphoserine; by GSK3-beta. At Thr-21 the chain carries Phosphothreonine; by GSK3-beta. Positions 36 to 41 match the Nuclear localization signal motif; sequence NRKRKG. Basic and acidic residues predominate over residues 51-60; the sequence is DTDKDDPHGR. The bHLH domain occupies 72–125; the sequence is NAREAHSQIEKRRRDKMNSFIDELASLVPTCNAMSRKLDKLTVLRMAVQHMKTL. At Ser-78 the chain carries Phosphoserine. Position 90 is a phosphoserine; by CK2 (Ser-90). Residues 142–152 carry the Nuclear export signal 1 motif; it reads LSDDELKHLIL. The PAS 1 domain occupies 143-215; that stretch reads SDDELKHLIL…EQLSSSDTAP (73 aa). Lys-252 is covalently cross-linked (Glycyl lysine isopeptide (Lys-Gly) (interchain with G-Cter in SUMO2 and SUMO3)). Residue Lys-259 forms a Glycyl lysine isopeptide (Lys-Gly) (interchain with G-Cter in SUMO); alternate linkage. A Glycyl lysine isopeptide (Lys-Gly) (interchain with G-Cter in SUMO2); alternate cross-link involves residue Lys-259. Positions 326–396 constitute a PAS 2 domain; the sequence is PQPVNGEIRV…ECHRQVLQTR (71 aa). The Nuclear export signal 2 signature appears at 361-369; sequence LAYLPQELL. Positions 401–444 constitute a PAC domain; the sequence is TNCYKFKIKDGSFITLRSRWFSFMNPWTKEVEYIVSTNTVVLAN. Disordered stretches follow at residues 457 to 493 and 510 to 597; these read TASPHSMDSMLPSGEGGPKRTHPTVPGIPGGTRAGAG and RGSS…SNDE. Residues 484 to 493 show a composition bias toward gly residues; sequence IPGGTRAGAG. Residues 508-588 form an interaction with CIART region; the sequence is RIRGSSPSSC…IGIDMIDNDQ (81 aa). Over residues 511 to 521 the composition is skewed to low complexity; it reads GSSPSSCGSSP. At Lys-538 the chain carries N6-acetyllysine.

In terms of assembly, component of the circadian clock oscillator which includes the CRY1/2 proteins, CLOCK or NPAS2, BMAL1 or BMAL2, CSNK1D and/or CSNK1E, TIMELESS and the PER1/2/3 proteins. Forms a heterodimer with CLOCK. The CLOCK-BMAL1 heterodimer is required for E-box-dependent transactivation, for CLOCK nuclear translocation and degradation, and, for phosphorylation of both CLOCK and BMAL1. Part of a nuclear complex which also includes RACK1 and PRKCA; RACK1 and PRKCA are recruited to the complex in a circadian manner. Interacts with NPAS2. Interacts with EZH2. Interacts with SUMO3. Interacts with SIRT1. Interacts with AHR. Interacts with ID1, ID2 and ID3. Interacts with DDX4. Interacts with OGT. Interacts with EED and SUZ12. Interacts with MTA1. Interacts with CIART. Interacts with HSP90. Interacts with KAT2B and EP300. Interacts with BHLHE40/DEC1 and BHLHE41/DEC2. Interacts with RELB and the interaction is enhanced in the presence of CLOCK. Interacts with PER1, PER2, CRY1 and CRY2 and this interaction requires a translocation to the nucleus. Interaction of the CLOCK-BMAL1 heterodimer with PER or CRY inhibits transcription activation. Interaction of the CLOCK-BMAL1 with CRY1 is independent of DNA but with PER2 is off DNA. The CLOCK-BMAL1 heterodimer interacts with GSK3B. Interacts with KDM5A. Interacts with KMT2A; in a circadian manner. Interacts with UBE3A. Interacts with PRKCG. Interacts with MAGEL2. Interacts with NCOA2. Interacts with THRAP3. The CLOCK-BMAL1 heterodimer interacts with PASD1. Interacts with PASD1. Interacts with USP9X. Interacts with PIWIL2 (via PIWI domain). Interacts with HDAC3. Interacts with HNF4A. Post-translationally, ubiquitinated, leading to its proteasomal degradation. Deubiquitinated by USP9X. O-glycosylated; contains O-GlcNAc. O-glycosylation by OGT prevents protein degradation by inhibiting ubiquitination. It also stabilizes the CLOCK-BMAL1 heterodimer thereby increasing CLOCK-BMAL1-mediated transcription of genes in the negative loop of the circadian clock such as PER1/2/3 and CRY1/2. In terms of processing, acetylated on Lys-538 by CLOCK during the repression phase of the circadian cycle. Acetylation facilitates recruitment of CRY1 protein and initiates the repression phase of the circadian cycle. Acetylated at Lys-538 by KAT5 during the activation phase of the cycle, leading to recruitment of the positive transcription elongation factor b (P-TEFb) and BRD4, followed by productive elongation of circadian transcripts. Deacetylated by SIRT1, which may result in decreased protein stability. Post-translationally, phosphorylated upon dimerization with CLOCK. Phosphorylation enhances the transcriptional activity, alters the subcellular localization and decreases the stability of the CLOCK-BMAL1 heterodimer by promoting its degradation. Phosphorylation shows circadian variations in the liver with a peak between CT10 to CT14. Phosphorylation at Ser-90 by CK2 is essential for its nuclear localization, its interaction with CLOCK and controls CLOCK nuclear entry. Dephosphorylation at Ser-78 is important for dimerization with CLOCK and transcriptional activity. Sumoylated on Lys-259 upon dimerization with CLOCK. Predominantly conjugated to poly-SUMO2/3 rather than SUMO1 and the level of these conjugates undergo rhythmic variation, peaking at CT9-CT12. Sumoylation localizes it exclusively to the PML body and promotes its ubiquitination in the PML body, ubiquitin-dependent proteasomal degradation and the transcriptional activity of the CLOCK-BMAL1 heterodimer. In terms of processing, undergoes lysosome-mediated degradation in a time-dependent manner in the liver.

It localises to the nucleus. The protein localises to the cytoplasm. It is found in the PML body. In terms of biological role, transcriptional activator which forms a core component of the circadian clock. The circadian clock, an internal time-keeping system, regulates various physiological processes through the generation of approximately 24 hour circadian rhythms in gene expression, which are translated into rhythms in metabolism and behavior. It is derived from the Latin roots 'circa' (about) and 'diem' (day) and acts as an important regulator of a wide array of physiological functions including metabolism, sleep, body temperature, blood pressure, endocrine, immune, cardiovascular, and renal function. Consists of two major components: the central clock, residing in the suprachiasmatic nucleus (SCN) of the brain, and the peripheral clocks that are present in nearly every tissue and organ system. Both the central and peripheral clocks can be reset by environmental cues, also known as Zeitgebers (German for 'timegivers'). The predominant Zeitgeber for the central clock is light, which is sensed by retina and signals directly to the SCN. The central clock entrains the peripheral clocks through neuronal and hormonal signals, body temperature and feeding-related cues, aligning all clocks with the external light/dark cycle. Circadian rhythms allow an organism to achieve temporal homeostasis with its environment at the molecular level by regulating gene expression to create a peak of protein expression once every 24 hours to control when a particular physiological process is most active with respect to the solar day. Transcription and translation of core clock components (CLOCK, NPAS2, BMAL1, BMAL2, PER1, PER2, PER3, CRY1 and CRY2) plays a critical role in rhythm generation, whereas delays imposed by post-translational modifications (PTMs) are important for determining the period (tau) of the rhythms (tau refers to the period of a rhythm and is the length, in time, of one complete cycle). A diurnal rhythm is synchronized with the day/night cycle, while the ultradian and infradian rhythms have a period shorter and longer than 24 hours, respectively. Disruptions in the circadian rhythms contribute to the pathology of cardiovascular diseases, cancer, metabolic syndromes and aging. A transcription/translation feedback loop (TTFL) forms the core of the molecular circadian clock mechanism. Transcription factors, CLOCK or NPAS2 and BMAL1 or BMAL2, form the positive limb of the feedback loop, act in the form of a heterodimer and activate the transcription of core clock genes and clock-controlled genes (involved in key metabolic processes), harboring E-box elements (5'-CACGTG-3') within their promoters. The core clock genes: PER1/2/3 and CRY1/2 which are transcriptional repressors form the negative limb of the feedback loop and interact with the CLOCK|NPAS2-BMAL1|BMAL2 heterodimer inhibiting its activity and thereby negatively regulating their own expression. This heterodimer also activates nuclear receptors NR1D1, NR1D2, RORA, RORB and RORG, which form a second feedback loop and which activate and repress BMAL1 transcription, respectively. BMAL1 positively regulates myogenesis and negatively regulates adipogenesis via the transcriptional control of the genes of the canonical Wnt signaling pathway. Plays a role in normal pancreatic beta-cell function; regulates glucose-stimulated insulin secretion via the regulation of antioxidant genes NFE2L2/NRF2 and its targets SESN2, PRDX3, CCLC and CCLM. Negatively regulates the mTORC1 signaling pathway; regulates the expression of MTOR and DEPTOR. Controls diurnal oscillations of Ly6C inflammatory monocytes; rhythmic recruitment of the PRC2 complex imparts diurnal variation to chemokine expression that is necessary to sustain Ly6C monocyte rhythms. Regulates the expression of HSD3B2, STAR, PTGS2, CYP11A1, CYP19A1 and LHCGR in the ovary and also the genes involved in hair growth. Plays an important role in adult hippocampal neurogenesis by regulating the timely entry of neural stem/progenitor cells (NSPCs) into the cell cycle and the number of cell divisions that take place prior to cell-cycle exit. Regulates the circadian expression of CIART. The CLOCK-BMAL1 heterodimer regulates the circadian expression of SERPINE1/PAI1, VWF, B3, CCRN4L/NOC, NAMPT, DBP, MYOD1, PPARGC1A, PPARGC1B, SIRT1, GYS2, F7, NGFR, GNRHR, BHLHE40/DEC1, ATF4, MTA1 and also genes implicated in glucose and lipid metabolism. Promotes rhythmic chromatin opening, regulating the DNA accessibility of other transcription factors. The NPAS2-BMAL1 heterodimer positively regulates the expression of MAOA, F7 and LDHA and modulates the circadian rhythm of daytime contrast sensitivity by regulating the rhythmic expression of adenylate cyclase type 1 (ADCY1) in the retina. The preferred binding motif for the CLOCK-BMAL1 heterodimer is 5'-CACGTGA-3', which contains a flanking adenine nucleotide at the 3-prime end of the canonical 6-nucleotide E-box sequence. CLOCK specifically binds to the half-site 5'-CAC-3', while BMAL1 binds to the half-site 5'-GTGA-3'. The CLOCK-BMAL1 heterodimer also recognizes the non-canonical E-box motifs 5'-AACGTGA-3' and 5'-CATGTGA-3'. Essential for the rhythmic interaction of CLOCK with ASS1 and plays a critical role in positively regulating CLOCK-mediated acetylation of ASS1. Plays a role in protecting against lethal sepsis by limiting the expression of immune checkpoint protein CD274 in macrophages in a PKM2-dependent manner. Regulates the diurnal rhythms of skeletal muscle metabolism via transcriptional activation of genes promoting triglyceride synthesis (DGAT2) and metabolic efficiency (COQ10B). The protein is Basic helix-loop-helix ARNT-like protein 1 (BMAL1) of Equus caballus (Horse).